Here is a 201-residue protein sequence, read N- to C-terminus: Recombination protein RecR (201 aa).

A C4-type zinc finger spans residues 59–74 (CEICGNMDTENICRIC). Positions 82-177 (SIIAIVETVA…KISRLASGIP (96 aa)) constitute a Toprim domain.

This sequence belongs to the RecR family.

Functionally, may play a role in DNA repair. It seems to be involved in an RecBC-independent recombinational process of DNA repair. It may act with RecF and RecO. The sequence is that of Recombination protein RecR from Rickettsia peacockii (strain Rustic).